The following is a 303-amino-acid chain: Recombination-associated protein RdgC (303 aa).

Belongs to the RdgC family.

It is found in the cytoplasm. The protein resides in the nucleoid. Functionally, may be involved in recombination. The polypeptide is Recombination-associated protein RdgC (Aeromonas hydrophila subsp. hydrophila (strain ATCC 7966 / DSM 30187 / BCRC 13018 / CCUG 14551 / JCM 1027 / KCTC 2358 / NCIMB 9240 / NCTC 8049)).